Consider the following 144-residue polypeptide: Putative pre-16S rRNA nuclease (144 aa).

The protein belongs to the YqgF nuclease family.

Its subcellular location is the cytoplasm. Its function is as follows. Could be a nuclease involved in processing of the 5'-end of pre-16S rRNA. This Pseudomonas aeruginosa (strain LESB58) protein is Putative pre-16S rRNA nuclease.